Reading from the N-terminus, the 73-residue chain is Beta-defensin 108B (73 aa).

The signal sequence occupies residues 1–22; it reads MRIAVLLFAIFFFMSQVLPARG. 3 disulfides stabilise this stretch: cysteine 28-cysteine 55, cysteine 35-cysteine 49, and cysteine 39-cysteine 56.

The protein belongs to the beta-defensin family. In terms of tissue distribution, specifically expressed in testis. Low expression is detected also in liver.

The protein localises to the secreted. Its function is as follows. Has antibacterial activity. This is Beta-defensin 108B (DEFB108B) from Homo sapiens (Human).